The primary structure comprises 245 residues: Eukaryotic translation initiation factor 6 (245 aa).

Phosphoserine; by CK1 occurs at positions 174 and 175.

This sequence belongs to the eIF-6 family. As to quaternary structure, monomer. Associates with the 60S ribosomal subunit. Phosphorylation at Ser-174 and Ser-175 promotes nuclear export.

It localises to the cytoplasm. It is found in the nucleus. The protein localises to the nucleolus. Its function is as follows. Binds to the 60S ribosomal subunit and prevents its association with the 40S ribosomal subunit to form the 80S initiation complex in the cytoplasm. Is also involved in ribosome biogenesis. Associates with pre-60S subunits in the nucleus and is involved in its nuclear export. The polypeptide is Eukaryotic translation initiation factor 6 (Candida albicans (strain SC5314 / ATCC MYA-2876) (Yeast)).